The sequence spans 491 residues: Ketol-acid reductoisomerase (NADP(+)) (491 aa).

A KARI N-terminal Rossmann domain is found at 15-208 (AQLGKCRFMG…GGHRAGVLES (194 aa)). NADP(+) is bound by residues 45–48 (CGAQ), Arg-68, Arg-76, Ser-78, and 108–110 (DKQ). His-132 is a catalytic residue. An NADP(+)-binding site is contributed by Gly-158. 2 consecutive KARI C-terminal knotted domains span residues 209-344 (SFVA…TAPQ) and 345-484 (YEGK…MTDM). Asp-217, Glu-221, Glu-389, and Glu-393 together coordinate Mg(2+). Ser-414 contacts substrate.

The protein belongs to the ketol-acid reductoisomerase family. It depends on Mg(2+) as a cofactor.

The enzyme catalyses (2R)-2,3-dihydroxy-3-methylbutanoate + NADP(+) = (2S)-2-acetolactate + NADPH + H(+). It carries out the reaction (2R,3R)-2,3-dihydroxy-3-methylpentanoate + NADP(+) = (S)-2-ethyl-2-hydroxy-3-oxobutanoate + NADPH + H(+). It participates in amino-acid biosynthesis; L-isoleucine biosynthesis; L-isoleucine from 2-oxobutanoate: step 2/4. It functions in the pathway amino-acid biosynthesis; L-valine biosynthesis; L-valine from pyruvate: step 2/4. In terms of biological role, involved in the biosynthesis of branched-chain amino acids (BCAA). Catalyzes an alkyl-migration followed by a ketol-acid reduction of (S)-2-acetolactate (S2AL) to yield (R)-2,3-dihydroxy-isovalerate. In the isomerase reaction, S2AL is rearranged via a Mg-dependent methyl migration to produce 3-hydroxy-3-methyl-2-ketobutyrate (HMKB). In the reductase reaction, this 2-ketoacid undergoes a metal-dependent reduction by NADPH to yield (R)-2,3-dihydroxy-isovalerate. The polypeptide is Ketol-acid reductoisomerase (NADP(+)) (Escherichia coli (strain 55989 / EAEC)).